Reading from the N-terminus, the 424-residue chain is Enolase (424 aa).

Q163 lines the (2R)-2-phosphoglycerate pocket. The active-site Proton donor is the E205. Mg(2+) contacts are provided by D242, E285, and D312. The (2R)-2-phosphoglycerate site is built by K337, R366, S367, and K388. The active-site Proton acceptor is K337.

Belongs to the enolase family. The cofactor is Mg(2+).

It localises to the cytoplasm. The protein localises to the secreted. The protein resides in the cell surface. The enzyme catalyses (2R)-2-phosphoglycerate = phosphoenolpyruvate + H2O. Its pathway is carbohydrate degradation; glycolysis; pyruvate from D-glyceraldehyde 3-phosphate: step 4/5. In terms of biological role, catalyzes the reversible conversion of 2-phosphoglycerate (2-PG) into phosphoenolpyruvate (PEP). It is essential for the degradation of carbohydrates via glycolysis. The sequence is that of Enolase from Roseobacter denitrificans (strain ATCC 33942 / OCh 114) (Erythrobacter sp. (strain OCh 114)).